Consider the following 76-residue polypeptide: UPF0729 protein C18orf32 homolog (76 aa).

Residues 1-37 (MVCIPCIVIPVLLWVYKKFLEPYIYPLISPFVSRMWP) are necessary for its localzation to the endoplasmic reticulum and lipid droplets. Residues 47-56 (KNKGKVDYKG) are compositionally biased toward basic and acidic residues. The disordered stretch occupies residues 47–76 (KNKGKVDYKGADINGLPTRGPTEMCDKKKD).

It belongs to the UPF0729 family. In terms of assembly, interacts with DERL1 and AMFR. In terms of processing, undergoes ER-associated degradation (ERAD).

It localises to the endoplasmic reticulum. The protein localises to the lipid droplet. May activate the NF-kappa-B signaling pathway. The polypeptide is UPF0729 protein C18orf32 homolog (Bos taurus (Bovine)).